The chain runs to 60 residues: Large ribosomal subunit protein uL30 (60 aa).

Belongs to the universal ribosomal protein uL30 family. As to quaternary structure, part of the 50S ribosomal subunit.

This is Large ribosomal subunit protein uL30 from Limosilactobacillus fermentum (strain NBRC 3956 / LMG 18251) (Lactobacillus fermentum).